The chain runs to 296 residues: MPELPEVEVVRRGLDAHVTGKAITAVRVHHPRAVRRHEAGPADLTARLLGMRITGTGRRGKYLWLTLDGGDEPLARRAESSVALVVHLGMSGQMLLGPIPKEDHLRIAALLDDGTALSFVDQRTFGGWLLADLVTVDGTDVPVPVAHVARDPLDPRFDRDAVVKVLRGKHSEIKRQLLDQTVVSGIGNIYADEALWRAKVNGARLAESLTKPKLAEILDHAADVMRDALGQGGTSFDSLYVNVNGESGYFDRSLDAYGREGEPCRRCGAIMRREKFMNRSSFYCPRCQPRPRVRRA.

The active-site Schiff-base intermediate with DNA is the Pro-2. The Proton donor role is filled by Glu-3. The active-site Proton donor; for beta-elimination activity is Lys-61. His-104, Arg-123, and Lys-169 together coordinate DNA. The FPG-type zinc-finger motif lies at 255-289 (DAYGREGEPCRRCGAIMRREKFMNRSSFYCPRCQP). The active-site Proton donor; for delta-elimination activity is the Arg-279.

It belongs to the FPG family. Monomer. It depends on Zn(2+) as a cofactor.

The enzyme catalyses Hydrolysis of DNA containing ring-opened 7-methylguanine residues, releasing 2,6-diamino-4-hydroxy-5-(N-methyl)formamidopyrimidine.. The catalysed reaction is 2'-deoxyribonucleotide-(2'-deoxyribose 5'-phosphate)-2'-deoxyribonucleotide-DNA = a 3'-end 2'-deoxyribonucleotide-(2,3-dehydro-2,3-deoxyribose 5'-phosphate)-DNA + a 5'-end 5'-phospho-2'-deoxyribonucleoside-DNA + H(+). In terms of biological role, involved in base excision repair of DNA damaged by oxidation or by mutagenic agents. Acts as a DNA glycosylase that recognizes and removes damaged bases. Has a preference for oxidized purines, such as 7,8-dihydro-8-oxoguanine (8-oxoG). Has AP (apurinic/apyrimidinic) lyase activity and introduces nicks in the DNA strand. Cleaves the DNA backbone by beta-delta elimination to generate a single-strand break at the site of the removed base with both 3'- and 5'-phosphates. This Mycobacterium sp. (strain JLS) protein is Formamidopyrimidine-DNA glycosylase.